Reading from the N-terminus, the 348-residue chain is MTDQTAASPRVLVTGGAGYIGSHVLHALTDAGIPAVTIDDLSAGRREAIPAAVPLVEGDIGSAELLDRVMRDHRVDAVMHFAGSIVVPESVVKPLDYYRNNTANSLTLLGACLRAGIDKVVFSSTAAVYGAPESVPIREDAPTVPINPYGASKLMTEQMLRDAGAAHGLRSVILRYFNVAGADPAGRTGQATPVATHLIKVACQALLGRRPPLAIFGTDYDTPDGTCIRDYIHVSDLADAHVLALLHLRRGGGSLLMNCGYGRGASVREVVRTLEEVSGEQVPATFADRRPGDPPQLVAGADRIREQLGWVPKHDRLDGIVRSALSWERSLEQSVGQAGAPGGSASRS.

Residue Thr125 participates in substrate binding. The active-site Proton acceptor is Tyr149.

Belongs to the NAD(P)-dependent epimerase/dehydratase family. The cofactor is NAD(+).

It carries out the reaction UDP-alpha-D-glucose = UDP-alpha-D-galactose. The protein operates within carbohydrate metabolism; galactose metabolism. Its pathway is glycan metabolism; exopolysaccharide biosynthesis. The protein is UDP-glucose 4-epimerase (exoB) of Azospirillum brasilense.